A 160-amino-acid chain; its full sequence is Endoribonuclease YbeY (160 aa).

Residues His-124, His-128, and His-134 each contribute to the Zn(2+) site.

It belongs to the endoribonuclease YbeY family. Zn(2+) serves as cofactor.

The protein resides in the cytoplasm. Its function is as follows. Single strand-specific metallo-endoribonuclease involved in late-stage 70S ribosome quality control and in maturation of the 3' terminus of the 16S rRNA. In Jannaschia sp. (strain CCS1), this protein is Endoribonuclease YbeY.